The following is a 479-amino-acid chain: Ribosomal RNA small subunit methyltransferase F (479 aa).

Residues 125–131 (AAAPGSK), Glu149, Asp176, and Asp194 contribute to the S-adenosyl-L-methionine site. The active-site Nucleophile is Cys247.

The protein belongs to the class I-like SAM-binding methyltransferase superfamily. RsmB/NOP family.

The protein resides in the cytoplasm. It carries out the reaction cytidine(1407) in 16S rRNA + S-adenosyl-L-methionine = 5-methylcytidine(1407) in 16S rRNA + S-adenosyl-L-homocysteine + H(+). Specifically methylates the cytosine at position 1407 (m5C1407) of 16S rRNA. The sequence is that of Ribosomal RNA small subunit methyltransferase F from Salmonella paratyphi C (strain RKS4594).